Here is a 304-residue protein sequence, read N- to C-terminus: Ubiquitin thioesterase OTU1 (304 aa).

The segment at Arg5–Arg83 is UBX-like. Residues Ile105 to Gln230 form the OTU domain. Positions Val110–Cys116 are cys-loop. Residue Asp113 is part of the active site. Cys116 serves as the catalytic Nucleophile. Positions Ile169 to Ile179 are variable-loop. The segment at Tyr219–His223 is his-loop. Ile222 is a substrate binding site. The active site involves His223. The tract at residues Asp247–Gln252 is S2 site. The C2H2-type zinc-finger motif lies at Leu274 to His298. Residue His298 is part of the active site.

The protein resides in the cytoplasm. It carries out the reaction Thiol-dependent hydrolysis of ester, thioester, amide, peptide and isopeptide bonds formed by the C-terminal Gly of ubiquitin (a 76-residue protein attached to proteins as an intracellular targeting signal).. In terms of biological role, hydrolase that can remove conjugated ubiquitin from proteins and participates in endoplasmic reticulum-associated degradation (ERAD) for misfolded lumenal proteins. May act by triming the ubiquitin chain on the associated substrate to facilitate their threading through the VCP/p97 pore. Ubiquitin moieties on substrates may present a steric impediment to the threading process when the substrate is transferred to the VCP pore and threaded through VCP's axial channel. Mediates deubiquitination of 'Lys-27'-, 'Lys-29'- and 'Lys-33'-linked polyubiquitin chains. Also able to hydrolyze 'Lys-11'-linked ubiquitin chains. Cleaves both polyubiquitin and di-ubiquitin. The protein is Ubiquitin thioesterase OTU1 (yod1) of Xenopus laevis (African clawed frog).